Reading from the N-terminus, the 469-residue chain is Adenosylhomocysteinase (469 aa).

Substrate-binding residues include T63, D139, and E164. 165-167 (TTT) contacts NAD(+). Positions 194 and 198 each coordinate substrate. NAD(+) contacts are provided by residues N199, 228–233 (GYGDVG), E251, N300, 321–323 (IGH), and N375.

It belongs to the adenosylhomocysteinase family. The cofactor is NAD(+).

The protein localises to the cytoplasm. It carries out the reaction S-adenosyl-L-homocysteine + H2O = L-homocysteine + adenosine. Its pathway is amino-acid biosynthesis; L-homocysteine biosynthesis; L-homocysteine from S-adenosyl-L-homocysteine: step 1/1. Its function is as follows. May play a key role in the regulation of the intracellular concentration of adenosylhomocysteine. This chain is Adenosylhomocysteinase, found in Pseudomonas syringae pv. tomato (strain ATCC BAA-871 / DC3000).